Reading from the N-terminus, the 105-residue chain is CRISPR-associated endoribonuclease Cas2 1 (105 aa).

Position 20 (Asp20) interacts with Mg(2+).

Belongs to the CRISPR-associated endoribonuclease Cas2 protein family. In terms of assembly, homodimer, forms a heterotetramer with a Cas1 homodimer. It depends on Mg(2+) as a cofactor.

Functionally, CRISPR (clustered regularly interspaced short palindromic repeat), is an adaptive immune system that provides protection against mobile genetic elements (viruses, transposable elements and conjugative plasmids). CRISPR clusters contain sequences complementary to antecedent mobile elements and target invading nucleic acids. CRISPR clusters are transcribed and processed into CRISPR RNA (crRNA). Functions as a ssRNA-specific endoribonuclease. Involved in the integration of spacer DNA into the CRISPR cassette. This Nitrosomonas europaea (strain ATCC 19718 / CIP 103999 / KCTC 2705 / NBRC 14298) protein is CRISPR-associated endoribonuclease Cas2 1 (cas21).